Consider the following 596-residue polypeptide: Elongation factor 4 (596 aa).

Residues 2-183 (ENIRNFSIIA…AIIERIPAPS (182 aa)) enclose the tr-type G domain. Residues 14 to 19 (DHGKST) and 130 to 133 (NKID) contribute to the GTP site.

This sequence belongs to the TRAFAC class translation factor GTPase superfamily. Classic translation factor GTPase family. LepA subfamily.

The protein localises to the cell inner membrane. It catalyses the reaction GTP + H2O = GDP + phosphate + H(+). Required for accurate and efficient protein synthesis under certain stress conditions. May act as a fidelity factor of the translation reaction, by catalyzing a one-codon backward translocation of tRNAs on improperly translocated ribosomes. Back-translocation proceeds from a post-translocation (POST) complex to a pre-translocation (PRE) complex, thus giving elongation factor G a second chance to translocate the tRNAs correctly. Binds to ribosomes in a GTP-dependent manner. This is Elongation factor 4 from Nitratiruptor sp. (strain SB155-2).